Here is a 452-residue protein sequence, read N- to C-terminus: UDP-N-acetylmuramoylalanine--D-glutamate ligase (452 aa).

G119–T125 provides a ligand contact to ATP.

This sequence belongs to the MurCDEF family.

Its subcellular location is the cytoplasm. The catalysed reaction is UDP-N-acetyl-alpha-D-muramoyl-L-alanine + D-glutamate + ATP = UDP-N-acetyl-alpha-D-muramoyl-L-alanyl-D-glutamate + ADP + phosphate + H(+). It functions in the pathway cell wall biogenesis; peptidoglycan biosynthesis. Functionally, cell wall formation. Catalyzes the addition of glutamate to the nucleotide precursor UDP-N-acetylmuramoyl-L-alanine (UMA). The sequence is that of UDP-N-acetylmuramoylalanine--D-glutamate ligase from Streptococcus pyogenes serotype M4 (strain MGAS10750).